The following is a 431-amino-acid chain: STE20-related kinase adapter protein alpha (431 aa).

A phosphoserine mark is found at S2 and S46. In terms of domain architecture, Protein kinase spans 69–379 (YELLTVIGKG…ASTLLNHSFF (311 aa)). Residues 310-347 (LTMSPSRSVANSGLSDSLTTSTPRPSNGDSPSHPYHRT) form a disordered region. Over residues 312-339 (MSPSRSVANSGLSDSLTTSTPRPSNGDS) the composition is skewed to polar residues. Phosphothreonine; by LKB1 is present on residues T329 and T401. T419 is subject to Phosphothreonine.

Belongs to the protein kinase superfamily. STE Ser/Thr protein kinase family. STE20 subfamily. Component of a trimeric complex composed of STK11/LKB1, STRAD (STRADA or STRADB) and CAB39/MO25 (CAB39/MO25alpha or CAB39L/MO25beta): the complex tethers STK11/LKB1 in the cytoplasm and stimulates its catalytic activity.

Its subcellular location is the nucleus. The protein resides in the cytoplasm. Its function is as follows. Pseudokinase which, in complex with CAB39/MO25 (CAB39/MO25alpha or CAB39L/MO25beta), binds to and activates STK11/LKB1. Adopts a closed conformation typical of active protein kinases and binds STK11/LKB1 as a pseudosubstrate, promoting conformational change of STK11/LKB1 in an active conformation. This chain is STE20-related kinase adapter protein alpha (STRADA), found in Pongo abelii (Sumatran orangutan).